The primary structure comprises 1045 residues: Endoglucanase B (1045 aa).

A signal peptide spans 1–33 (MLRQVPRTLVAGGSALAVAVGVLVAPLATGAAA). Residues 34–492 (APTYNYAEAL…LASFPTPEQP (459 aa)) are catalytic. D91 serves as the catalytic Nucleophile. Active-site residues include H410, D449, and E458. The CBM3 domain occupies 493–642 (DGDQLFVEAM…STLVWGKEPT (150 aa)). 4 linker ('hinge') (Pro-Thr box) regions span residues 644 to 650 (TTTDTTP), 734 to 748 (AAVT…ETEP), 831 to 846 (APVT…DTVA), and 931 to 944 (SPVT…TSTP). 3 Fibronectin type-III domains span residues 653–743 (TPGT…TDTT), 751–840 (TPGT…TAAP), and 849–940 (VPGT…TLPV). In terms of domain architecture, CBM2 spans 939 to 1045 (PVTSTPSCTV…SFTVNGEVCG (107 aa)). Residues C946 and C1044 are joined by a disulfide bond.

The protein belongs to the glycosyl hydrolase 9 (cellulase E) family.

The enzyme catalyses Endohydrolysis of (1-&gt;4)-beta-D-glucosidic linkages in cellulose, lichenin and cereal beta-D-glucans.. In terms of biological role, the biological conversion of cellulose to glucose generally requires three types of hydrolytic enzymes: (1) Endoglucanases which cut internal beta-1,4-glucosidic bonds; (2) Exocellobiohydrolases that cut the disaccharide cellobiose from the non-reducing end of the cellulose polymer chain; (3) Beta-1,4-glucosidases which hydrolyze the cellobiose and other short cello-oligosaccharides to glucose. The chain is Endoglucanase B (cenB) from Cellulomonas fimi.